A 93-amino-acid chain; its full sequence is DNA/RNA-binding protein Alba 2 (93 aa).

Belongs to the histone-like Alba family.

The protein localises to the cytoplasm. Its subcellular location is the chromosome. Binds double-stranded DNA tightly but without sequence specificity. Involved in DNA compaction. In Methanopyrus kandleri (strain AV19 / DSM 6324 / JCM 9639 / NBRC 100938), this protein is DNA/RNA-binding protein Alba 2.